Reading from the N-terminus, the 154-residue chain is MGLSDGEWQLVLNVWGKVEADLAGHGQDVLIRLFKGHPETLEKFDKFKHLKTEADMKASEDLKKHGNTVLTALGAILKKKGHHDAELKPLAQSHATKHKIPIKYLEFISEAIIHVLHSRHPAEFGADAQGAMNKALELFRKDIAAKYKELGFHG.

One can recognise a Globin domain in the interval 2–148 (GLSDGEWQLV…FRKDIAAKYK (147 aa)). The residue at position 4 (serine 4) is a Phosphoserine. Histidine 65 contributes to the nitrite binding site. Position 65 (histidine 65) interacts with O2. Threonine 68 carries the phosphothreonine modification. Histidine 94 is a heme b binding site.

This sequence belongs to the globin family. In terms of assembly, monomeric.

The protein resides in the cytoplasm. It is found in the sarcoplasm. The catalysed reaction is Fe(III)-heme b-[protein] + nitric oxide + H2O = Fe(II)-heme b-[protein] + nitrite + 2 H(+). The enzyme catalyses H2O2 + AH2 = A + 2 H2O. Its function is as follows. Monomeric heme protein which primary function is to store oxygen and facilitate its diffusion within muscle tissues. Reversibly binds oxygen through a pentacoordinated heme iron and enables its timely and efficient release as needed during periods of heightened demand. Depending on the oxidative conditions of tissues and cells, and in addition to its ability to bind oxygen, it also has a nitrite reductase activity whereby it regulates the production of bioactive nitric oxide. Under stress conditions, like hypoxia and anoxia, it also protects cells against reactive oxygen species thanks to its pseudoperoxidase activity. This is Myoglobin (MB) from Delphinus delphis (Short-beaked common dolphin).